The chain runs to 344 residues: Heat-inducible transcription repressor HrcA (344 aa).

This sequence belongs to the HrcA family.

In terms of biological role, negative regulator of class I heat shock genes (grpE-dnaK-dnaJ and groELS operons). Prevents heat-shock induction of these operons. In Corynebacterium aurimucosum (strain ATCC 700975 / DSM 44827 / CIP 107346 / CN-1) (Corynebacterium nigricans), this protein is Heat-inducible transcription repressor HrcA.